A 349-amino-acid polypeptide reads, in one-letter code: GTP 3',8-cyclase (349 aa).

A Radical SAM core domain is found at 24–250 (PFGRAVTYLR…DIPYRTGGPA (227 aa)). Position 33 (Arg33) interacts with GTP. Residues Cys40 and Cys44 each contribute to the [4Fe-4S] cluster site. Tyr46 serves as a coordination point for S-adenosyl-L-methionine. Cys47 lines the [4Fe-4S] cluster pocket. Arg82 is a binding site for GTP. S-adenosyl-L-methionine is bound at residue Gly86. Thr116 is a GTP binding site. S-adenosyl-L-methionine is bound at residue Ser140. Residue Lys176 coordinates GTP. Residue Met210 participates in S-adenosyl-L-methionine binding. Residues Cys273 and Cys276 each contribute to the [4Fe-4S] cluster site. A GTP-binding site is contributed by 278–280 (RVR). Position 290 (Cys290) interacts with [4Fe-4S] cluster.

It belongs to the radical SAM superfamily. MoaA family. As to quaternary structure, monomer and homodimer. It depends on [4Fe-4S] cluster as a cofactor.

The catalysed reaction is GTP + AH2 + S-adenosyl-L-methionine = (8S)-3',8-cyclo-7,8-dihydroguanosine 5'-triphosphate + 5'-deoxyadenosine + L-methionine + A + H(+). It participates in cofactor biosynthesis; molybdopterin biosynthesis. Functionally, catalyzes the cyclization of GTP to (8S)-3',8-cyclo-7,8-dihydroguanosine 5'-triphosphate. In Rhizobium meliloti (strain 1021) (Ensifer meliloti), this protein is GTP 3',8-cyclase.